The primary structure comprises 479 residues: uncharacterized protein (479 aa).

Residues 150 to 158 (TSGSTGKPK), aspartate 360, arginine 375, and lysine 462 each bind ATP.

This sequence belongs to the ATP-dependent AMP-binding enzyme family.

In terms of biological role, may be involved in fatty acid metabolism. This is an uncharacterized protein from Bacillus subtilis (strain 168).